The primary structure comprises 267 residues: B3 domain-containing protein Os02g0455800 (267 aa).

Positions 30-131 (EKFLMPSDLC…RLFICCRLGT (102 aa)) form a DNA-binding region, TF-B3. The interval 172–221 (QARLHDGNQDGGGAPSRHVPSSGRRVEAQLSRVSSRRQRRTMKHSIPEPT) is disordered. Residues 205-214 (SSRRQRRTMK) are compositionally biased toward basic residues.

The protein localises to the nucleus. The sequence is that of B3 domain-containing protein Os02g0455800 from Oryza sativa subsp. japonica (Rice).